The following is a 28-amino-acid chain: Odorant-binding protein 1 (28 aa).

Belongs to the calycin superfamily. Lipocalin family. Nasal mucosa.

The protein localises to the secreted. It localises to the extracellular space. Functionally, this soluble protein may play a specific role in odor discrimination and perception. The protein is Odorant-binding protein 1 of Hystrix cristata (North African crested porcupine).